A 383-amino-acid polypeptide reads, in one-letter code: Probable cell wall hydrolase LytN (383 aa).

The first 49 residues, 1-49 (MFVYYCKECFIMNKQQSKVRYSIRKVSIGILSISIGMFLALGMSNKAYA), serve as a signal peptide directing secretion. The LysM domain maps to 175 to 219 (QIYTVKKGDTLSAIALKYKTTVSNIQNTNNIANPNLIFIGQKLKV). One can recognise a Peptidase C51 domain in the interval 241–378 (NSSTLNYLKT…NYENDMIFIR (138 aa)).

It is found in the secreted. Its function is as follows. Probably involved in peptidoglycan hydrolysis. This chain is Probable cell wall hydrolase LytN (lytN), found in Staphylococcus aureus (strain NCTC 8325 / PS 47).